Reading from the N-terminus, the 1226-residue chain is Chitin synthase IV (1226 aa).

Positions 1–205 are disordered; it reads MSLPERPGGS…SRKNPATAEQ (205 aa). Residues 49–65 are compositionally biased toward polar residues; the sequence is SVSSYAETISNPHANTE. Positions 66-75 are enriched in low complexity; the sequence is TLPLSPTHPT. The span at 94-107 shows a compositional bias: basic and acidic residues; sequence IRPERNRIDKDHRN. Residues 134–151 show a composition bias toward polar residues; it reads DVSTEPSGGSQTHGSFAD. The segment covering 163 to 172 has biased composition (basic and acidic residues); the sequence is MSGDDQEKGN. Residues 173-198 show a composition bias toward basic residues; that stretch reads TRVKSRPRRSKSGKITKETRHRKSRK. A helical membrane pass occupies residues 246–266; sequence MGLISIILVIMAIVGFLTFGF. N-linked (GlcNAc...) asparagine glycosylation is found at Asn-381, Asn-421, and Asn-443. The chain crosses the membrane as a helical span at residues 516–536; it reads ILILSVVGTRFVLALIFQWFI. Residues 572–671 are disordered; the sequence is LPGDVGSSAM…PGPAGFIHDS (100 aa). Polar residues-rich tracts occupy residues 580–601 and 618–643; these read AMGS…TSRF and TTMS…NDSR. Asn-640 carries an N-linked (GlcNAc...) asparagine glycan. The segment covering 649–666 has biased composition (low complexity); that stretch reads PDPYSSAASPSDGPGPAG. Asn-787 and Asn-1035 each carry an N-linked (GlcNAc...) asparagine glycan. The next 3 helical transmembrane spans lie at 1060–1080, 1094–1114, and 1118–1138; these read FVVF…AFTF, IIPL…ILVT, and WSYV…NFVL.

The protein belongs to the chitin synthase family. Class IV subfamily. As to expression, highly expressed in conidia.

The protein localises to the cell membrane. The enzyme catalyses [(1-&gt;4)-N-acetyl-beta-D-glucosaminyl](n) + UDP-N-acetyl-alpha-D-glucosamine = [(1-&gt;4)-N-acetyl-beta-D-glucosaminyl](n+1) + UDP + H(+). In terms of biological role, polymerizes chitin, a structural polymer of the cell wall and septum, by transferring the sugar moiety of UDP-GlcNAc to the non-reducing end of the growing chitin polymer. Contributes to the production of conidia and the ability of fungal conidia to germinate. Involved in fungal stress tolerances. The chain is Chitin synthase IV from Metarhizium acridum (strain CQMa 102).